We begin with the raw amino-acid sequence, 228 residues long: Cytidylate kinase (228 aa).

G11–S19 is a binding site for ATP.

The protein belongs to the cytidylate kinase family. Type 1 subfamily.

The protein resides in the cytoplasm. It catalyses the reaction CMP + ATP = CDP + ADP. The enzyme catalyses dCMP + ATP = dCDP + ADP. The chain is Cytidylate kinase from Mycobacterium avium (strain 104).